The primary structure comprises 434 residues: Oxysterol-binding protein homolog 5 (434 aa).

An OSBP-related domain (ORD) region spans residues 18–371 (SSFNGDLSSL…KQVDYMNENT (354 aa)). 24 to 29 (LSSLSA) lines the a 1,2-diacyl-sn-glycero-3-phospho-(1D-myo-inositol 4-phosphate) pocket. Q96 lines the 20-hydroxycholesterol pocket. A 25-hydroxycholesterol-binding site is contributed by Q96. 7beta-hydroxycholesterol contacts are provided by Q96 and R100. Q96 lines the cholesterol pocket. Q96 serves as a coordination point for ergosterol. A 1,2-diacyl-sn-glycero-3-phospho-(1D-myo-inositol 4-phosphate)-binding positions include 109 to 112 (KPLN), 143 to 144 (HH), K335, E339, and R343. S389 bears the Phosphoserine mark.

The protein belongs to the OSBP family.

The protein resides in the vacuole membrane. Its subcellular location is the bud neck. Lipid transport protein (LTP) involved in non-vesicular transfer of lipids between membranes. Functions in phosphoinositide-coupled directional transport of various lipids by carrying the lipid molecule in a hydrophobic pocket and transferring it between membranes through the cytosol. Involved in maintenance of intracellular sterol distribution and homeostasis. Plays a role in ergosterol synthesis. Binds and transports sterol. May be involved in ergosterol transport from the plasma membrane (PM) to the ER. This chain is Oxysterol-binding protein homolog 5, found in Saccharomyces cerevisiae (strain ATCC 204508 / S288c) (Baker's yeast).